We begin with the raw amino-acid sequence, 509 residues long: Maturase K (509 aa).

It belongs to the intron maturase 2 family. MatK subfamily.

Its subcellular location is the plastid. It is found in the chloroplast. Usually encoded in the trnK tRNA gene intron. Probably assists in splicing its own and other chloroplast group II introns. The chain is Maturase K from Clematis lasiantha (Pipestem clematis).